A 374-amino-acid chain; its full sequence is Peptide chain release factor 2 (374 aa).

Glutamine 256 is modified (N5-methylglutamine).

This sequence belongs to the prokaryotic/mitochondrial release factor family. Post-translationally, methylated by PrmC. Methylation increases the termination efficiency of RF2.

It is found in the cytoplasm. Its function is as follows. Peptide chain release factor 2 directs the termination of translation in response to the peptide chain termination codons UGA and UAA. The sequence is that of Peptide chain release factor 2 from Mycobacterium leprae (strain Br4923).